The sequence spans 249 residues: 5'-nucleotidase SurE (249 aa).

Residues Asp-8, Asp-9, Ser-39, and Asn-91 each contribute to the a divalent metal cation site.

It belongs to the SurE nucleotidase family. Requires a divalent metal cation as cofactor.

The protein localises to the cytoplasm. It carries out the reaction a ribonucleoside 5'-phosphate + H2O = a ribonucleoside + phosphate. Its function is as follows. Nucleotidase that shows phosphatase activity on nucleoside 5'-monophosphates. The protein is 5'-nucleotidase SurE of Pseudomonas fluorescens (strain SBW25).